The following is a 231-amino-acid chain: 5'-methylthioadenosine/S-adenosylhomocysteine nucleosidase (231 aa).

Residue Glu12 is the Proton acceptor of the active site. Substrate-binding positions include Gly78, Met153, and 174 to 175; that span reads ME. The Proton donor role is filled by Asp198.

The protein belongs to the PNP/UDP phosphorylase family. MtnN subfamily.

It carries out the reaction S-adenosyl-L-homocysteine + H2O = S-(5-deoxy-D-ribos-5-yl)-L-homocysteine + adenine. The catalysed reaction is S-methyl-5'-thioadenosine + H2O = 5-(methylsulfanyl)-D-ribose + adenine. The enzyme catalyses 5'-deoxyadenosine + H2O = 5-deoxy-D-ribose + adenine. It participates in amino-acid biosynthesis; L-methionine biosynthesis via salvage pathway; S-methyl-5-thio-alpha-D-ribose 1-phosphate from S-methyl-5'-thioadenosine (hydrolase route): step 1/2. Its function is as follows. Catalyzes the irreversible cleavage of the glycosidic bond in both 5'-methylthioadenosine (MTA) and S-adenosylhomocysteine (SAH/AdoHcy) to adenine and the corresponding thioribose, 5'-methylthioribose and S-ribosylhomocysteine, respectively. Also cleaves 5'-deoxyadenosine, a toxic by-product of radical S-adenosylmethionine (SAM) enzymes, into 5-deoxyribose and adenine. The sequence is that of 5'-methylthioadenosine/S-adenosylhomocysteine nucleosidase from Bacillus cereus (strain B4264).